The sequence spans 226 residues: ATP synthase F(0) complex subunit a (226 aa).

Transmembrane regions (helical) follow at residues 6 to 26 (FASF…IIMF), 68 to 88 (WTLM…LGLL), 97 to 117 (QLSM…ITGF), 138 to 158 (IPML…ALAV), 164 to 184 (ITAG…LMNI), and 189 to 209 (ATIT…VALI).

The protein belongs to the ATPase A chain family. In terms of assembly, component of the ATP synthase complex composed at least of ATP5F1A/subunit alpha, ATP5F1B/subunit beta, ATP5MC1/subunit c (homooctomer), MT-ATP6/subunit a, MT-ATP8/subunit 8, ATP5ME/subunit e, ATP5MF/subunit f, ATP5MG/subunit g, ATP5MK/subunit k, ATP5MJ/subunit j, ATP5F1C/subunit gamma, ATP5F1D/subunit delta, ATP5F1E/subunit epsilon, ATP5PF/subunit F6, ATP5PB/subunit b, ATP5PD/subunit d, ATP5PO/subunit OSCP. ATP synthase complex consists of a soluble F(1) head domain (subunits alpha(3) and beta(3)) - the catalytic core - and a membrane F(0) domain - the membrane proton channel (subunits c, a, 8, e, f, g, k and j). These two domains are linked by a central stalk (subunits gamma, delta, and epsilon) rotating inside the F1 region and a stationary peripheral stalk (subunits F6, b, d, and OSCP). Interacts with DNAJC30; interaction is direct.

Its subcellular location is the mitochondrion inner membrane. It carries out the reaction H(+)(in) = H(+)(out). Its function is as follows. Subunit a, of the mitochondrial membrane ATP synthase complex (F(1)F(0) ATP synthase or Complex V) that produces ATP from ADP in the presence of a proton gradient across the membrane which is generated by electron transport complexes of the respiratory chain. ATP synthase complex consist of a soluble F(1) head domain - the catalytic core - and a membrane F(1) domain - the membrane proton channel. These two domains are linked by a central stalk rotating inside the F(1) region and a stationary peripheral stalk. During catalysis, ATP synthesis in the catalytic domain of F(1) is coupled via a rotary mechanism of the central stalk subunits to proton translocation. With the subunit c (ATP5MC1), forms the proton-conducting channel in the F(0) domain, that contains two crucial half-channels (inlet and outlet) that facilitate proton movement from the mitochondrial intermembrane space (IMS) into the matrix. Protons are taken up via the inlet half-channel and released through the outlet half-channel, following a Grotthuss mechanism. This is ATP synthase F(0) complex subunit a from Mus musculus (Mouse).